A 451-amino-acid chain; its full sequence is Tubulin alpha-1 chain (451 aa).

A GTP-binding site is contributed by glutamine 11. Lysine 40 carries the N6-acetyllysine modification. The GTP site is built by glutamate 71, threonine 145, threonine 179, asparagine 206, and asparagine 228. Glutamate 71 provides a ligand contact to Mg(2+). Residue glutamate 254 is part of the active site. The tract at residues 429 to 451 is disordered; it reads EKDYEEVGAESGEGEEGDEGEEY. The segment covering 431–451 has biased composition (acidic residues); sequence DYEEVGAESGEGEEGDEGEEY.

Belongs to the tubulin family. As to quaternary structure, dimer of alpha and beta chains. A typical microtubule is a hollow water-filled tube with an outer diameter of 25 nm and an inner diameter of 15 nM. Alpha-beta heterodimers associate head-to-tail to form protofilaments running lengthwise along the microtubule wall with the beta-tubulin subunit facing the microtubule plus end conferring a structural polarity. Microtubules usually have 13 protofilaments but different protofilament numbers can be found in some organisms and specialized cells. The cofactor is Mg(2+). Undergoes a tyrosination/detyrosination cycle, the cyclic removal and re-addition of a C-terminal tyrosine residue by the enzymes tubulin tyrosine carboxypeptidase (TTCP) and tubulin tyrosine ligase (TTL), respectively. Post-translationally, acetylation of alpha chains at Lys-40 stabilizes microtubules and affects affinity and processivity of microtubule motors. This modification has a role in multiple cellular functions, ranging from cell motility, cell cycle progression or cell differentiation to intracellular trafficking and signaling.

The protein resides in the cytoplasm. The protein localises to the cytoskeleton. It catalyses the reaction GTP + H2O = GDP + phosphate + H(+). In terms of biological role, tubulin is the major constituent of microtubules, a cylinder consisting of laterally associated linear protofilaments composed of alpha- and beta-tubulin heterodimers. Microtubules grow by the addition of GTP-tubulin dimers to the microtubule end, where a stabilizing cap forms. Below the cap, tubulin dimers are in GDP-bound state, owing to GTPase activity of alpha-tubulin. In Anemia phyllitidis (Fern), this protein is Tubulin alpha-1 chain (TUBA1).